We begin with the raw amino-acid sequence, 152 residues long: Xanthine-guanine phosphoribosyltransferase (152 aa).

Residues 37-38, Arg-69, and 88-96 contribute to the 5-phospho-alpha-D-ribose 1-diphosphate site; these read RG and DDLVDTGGT. Arg-69 contributes to the GMP binding site. Asp-89 serves as a coordination point for Mg(2+). Residues Asp-92 and Ile-135 each coordinate guanine. Residues Asp-92 and Ile-135 each coordinate xanthine. Residues 92-96 and 134-135 contribute to the GMP site; these read DTGGT and WI.

It belongs to the purine/pyrimidine phosphoribosyltransferase family. XGPT subfamily. In terms of assembly, homotetramer. The cofactor is Mg(2+).

The protein resides in the cell inner membrane. It catalyses the reaction GMP + diphosphate = guanine + 5-phospho-alpha-D-ribose 1-diphosphate. The catalysed reaction is XMP + diphosphate = xanthine + 5-phospho-alpha-D-ribose 1-diphosphate. The enzyme catalyses IMP + diphosphate = hypoxanthine + 5-phospho-alpha-D-ribose 1-diphosphate. Its pathway is purine metabolism; GMP biosynthesis via salvage pathway; GMP from guanine: step 1/1. It participates in purine metabolism; XMP biosynthesis via salvage pathway; XMP from xanthine: step 1/1. Its function is as follows. Purine salvage pathway enzyme that catalyzes the transfer of the ribosyl-5-phosphate group from 5-phospho-alpha-D-ribose 1-diphosphate (PRPP) to the N9 position of the 6-oxopurines guanine and xanthine to form the corresponding ribonucleotides GMP (guanosine 5'-monophosphate) and XMP (xanthosine 5'-monophosphate), with the release of PPi. To a lesser extent, also acts on hypoxanthine. This is Xanthine-guanine phosphoribosyltransferase from Salmonella choleraesuis (strain SC-B67).